Reading from the N-terminus, the 349-residue chain is MEKGINQRKTEHIRLCLTGNVEGVNKSTGLEGINFIHNALPEIDFADISLESSFLGKQLKAPFLVSSMTGGSELATKINQNLAIAAEEKGWALAIGSTRAFLESDQHKESFLIRNQAPTAPLIVNIGAVQLNYGYGPEECQRIIDKTNADSIVLHLNSLQEAVQDGGDLNFKDLLPKIEQVCKQVKAPVGVKEVGFGIDGEVARRLYDAGISYIDVAGAGGTSWSQVEKLRSKDPLNKAAAEAFNNWGTPTKDCLVSVRGELPEAPLVASGGMKTGVDAAKAITIGADVVGFARHLLKAAMETPEDVIRTMEQLELELKMTMFGIGAVNLEELKNTSRVSIMGQSLMDK.

Position 8 to 9 (8 to 9 (RK)) interacts with substrate. Residues Ser-66, 67 to 69 (SMT), Ser-97, and Asn-125 contribute to the FMN site. 97 to 99 (STR) contributes to the substrate binding site. Substrate is bound at residue Gln-160. Position 161 (Glu-161) interacts with Mg(2+). Residues Lys-192, Thr-222, 272 to 274 (GMK), and 293 to 294 (AR) contribute to the FMN site.

Belongs to the IPP isomerase type 2 family. As to quaternary structure, homooctamer. Dimer of tetramers. Requires FMN as cofactor. NADPH serves as cofactor. The cofactor is Mg(2+).

The protein resides in the cytoplasm. The catalysed reaction is isopentenyl diphosphate = dimethylallyl diphosphate. Its function is as follows. Involved in the biosynthesis of isoprenoids. Catalyzes the 1,3-allylic rearrangement of the homoallylic substrate isopentenyl (IPP) to its allylic isomer, dimethylallyl diphosphate (DMAPP). The chain is Isopentenyl-diphosphate delta-isomerase from Oceanobacillus iheyensis (strain DSM 14371 / CIP 107618 / JCM 11309 / KCTC 3954 / HTE831).